A 205-amino-acid polypeptide reads, in one-letter code: ATP synthase subunit b 1 (205 aa).

The segment covering Met-1 to Gln-15 has biased composition (polar residues). The tract at residues Met-1 to Ala-26 is disordered. A compositionally biased stretch (low complexity) spans Pro-16–Ala-26. A helical transmembrane segment spans residues Ser-56–Pro-78.

The protein belongs to the ATPase B chain family. In terms of assembly, F-type ATPases have 2 components, F(1) - the catalytic core - and F(0) - the membrane proton channel. F(1) has five subunits: alpha(3), beta(3), gamma(1), delta(1), epsilon(1). F(0) has three main subunits: a(1), b(2) and c(10-14). The alpha and beta chains form an alternating ring which encloses part of the gamma chain. F(1) is attached to F(0) by a central stalk formed by the gamma and epsilon chains, while a peripheral stalk is formed by the delta and b chains.

It localises to the cell inner membrane. Its function is as follows. F(1)F(0) ATP synthase produces ATP from ADP in the presence of a proton or sodium gradient. F-type ATPases consist of two structural domains, F(1) containing the extramembraneous catalytic core and F(0) containing the membrane proton channel, linked together by a central stalk and a peripheral stalk. During catalysis, ATP synthesis in the catalytic domain of F(1) is coupled via a rotary mechanism of the central stalk subunits to proton translocation. Functionally, component of the F(0) channel, it forms part of the peripheral stalk, linking F(1) to F(0). The polypeptide is ATP synthase subunit b 1 (Brucella anthropi (strain ATCC 49188 / DSM 6882 / CCUG 24695 / JCM 21032 / LMG 3331 / NBRC 15819 / NCTC 12168 / Alc 37) (Ochrobactrum anthropi)).